The following is a 23-amino-acid chain: NADP-dependent malic enzyme (23 aa).

The protein belongs to the malic enzymes family. In terms of assembly, homotetramer.

It carries out the reaction (S)-malate + NADP(+) = pyruvate + CO2 + NADPH. The catalysed reaction is oxaloacetate + H(+) = pyruvate + CO2. In Populus euphratica (Euphrates poplar), this protein is NADP-dependent malic enzyme.